A 639-amino-acid polypeptide reads, in one-letter code: Chaperone protein DnaK (639 aa).

Phosphothreonine; by autocatalysis is present on Thr-198. Over residues 603–618 (AKAQTQGGAQEGAAKQ) the composition is skewed to low complexity. The interval 603-639 (AKAQTQGGAQEGAAKQSNATADDVVDAEFEEVKDDKK) is disordered. Positions 625-639 (DVVDAEFEEVKDDKK) are enriched in acidic residues.

It belongs to the heat shock protein 70 family.

Its function is as follows. Acts as a chaperone. The protein is Chaperone protein DnaK of Shewanella sp. (strain ANA-3).